Here is a 378-residue protein sequence, read N- to C-terminus: Cobalt-precorrin-5B C(1)-methyltransferase (378 aa).

This sequence belongs to the CbiD family.

The enzyme catalyses Co-precorrin-5B + S-adenosyl-L-methionine = Co-precorrin-6A + S-adenosyl-L-homocysteine. The protein operates within cofactor biosynthesis; adenosylcobalamin biosynthesis; cob(II)yrinate a,c-diamide from sirohydrochlorin (anaerobic route): step 6/10. Its function is as follows. Catalyzes the methylation of C-1 in cobalt-precorrin-5B to form cobalt-precorrin-6A. The chain is Cobalt-precorrin-5B C(1)-methyltransferase from Methanococcus aeolicus (strain ATCC BAA-1280 / DSM 17508 / OCM 812 / Nankai-3).